The following is a 1299-amino-acid chain: DNA-directed RNA polymerase subunit beta' (1299 aa).

Residues cysteine 60, cysteine 62, cysteine 75, and cysteine 78 each coordinate Zn(2+). The segment at 188–209 (GAKSDQKRRAKDGAEKEMGQTR) is disordered. Residues aspartate 535, aspartate 537, and aspartate 539 each coordinate Mg(2+). 4 residues coordinate Zn(2+): cysteine 882, cysteine 959, cysteine 966, and cysteine 969.

It belongs to the RNA polymerase beta' chain family. In terms of assembly, the RNAP catalytic core consists of 2 alpha, 1 beta, 1 beta' and 1 omega subunit. When a sigma factor is associated with the core the holoenzyme is formed, which can initiate transcription. Requires Mg(2+) as cofactor. Zn(2+) serves as cofactor.

The enzyme catalyses RNA(n) + a ribonucleoside 5'-triphosphate = RNA(n+1) + diphosphate. Functionally, DNA-dependent RNA polymerase catalyzes the transcription of DNA into RNA using the four ribonucleoside triphosphates as substrates. The sequence is that of DNA-directed RNA polymerase subunit beta' from Clavibacter sepedonicus (Clavibacter michiganensis subsp. sepedonicus).